Reading from the N-terminus, the 215-residue chain is Adenylate kinase (215 aa).

Residue 10–15 (GAGKGT) coordinates ATP. The tract at residues 30–58 (STGDMLREAKRSGTLEKRYLDIMDSGGLL) is NMP. AMP contacts are provided by residues Thr-31, Arg-36, 56–58 (GLL), 84–87 (GFPR), and Gln-91. The tract at residues 128 to 158 (HRRTDKRSGQIYHLVYNPPPPGAELEHRADD) is LID. Residues Arg-129 and 138 to 139 (IY) each bind ATP. The AMP site is built by Arg-155 and Arg-166. Gly-194 contacts ATP.

It belongs to the adenylate kinase family. In terms of assembly, monomer.

The protein localises to the cytoplasm. It catalyses the reaction AMP + ATP = 2 ADP. Its pathway is purine metabolism; AMP biosynthesis via salvage pathway; AMP from ADP: step 1/1. Catalyzes the reversible transfer of the terminal phosphate group between ATP and AMP. Plays an important role in cellular energy homeostasis and in adenine nucleotide metabolism. This Sorangium cellulosum (strain So ce56) (Polyangium cellulosum (strain So ce56)) protein is Adenylate kinase.